We begin with the raw amino-acid sequence, 202 residues long: ATP-dependent Clp protease proteolytic subunit (202 aa).

S106 acts as the Nucleophile in catalysis. Residue H131 is part of the active site.

Belongs to the peptidase S14 family. As to quaternary structure, fourteen ClpP subunits assemble into 2 heptameric rings which stack back to back to give a disk-like structure with a central cavity, resembling the structure of eukaryotic proteasomes.

The protein localises to the cytoplasm. It catalyses the reaction Hydrolysis of proteins to small peptides in the presence of ATP and magnesium. alpha-casein is the usual test substrate. In the absence of ATP, only oligopeptides shorter than five residues are hydrolyzed (such as succinyl-Leu-Tyr-|-NHMec, and Leu-Tyr-Leu-|-Tyr-Trp, in which cleavage of the -Tyr-|-Leu- and -Tyr-|-Trp bonds also occurs).. In terms of biological role, cleaves peptides in various proteins in a process that requires ATP hydrolysis. Has a chymotrypsin-like activity. Plays a major role in the degradation of misfolded proteins. The sequence is that of ATP-dependent Clp protease proteolytic subunit from Shewanella sp. (strain ANA-3).